A 368-amino-acid chain; its full sequence is Probable dual-specificity RNA methyltransferase RlmN (368 aa).

The Proton acceptor role is filled by Glu-100. The 239-residue stretch at 106 to 344 (QHYGLSVCVT…CVVRQEHGTD (239 aa)) folds into the Radical SAM core domain. An intrachain disulfide couples Cys-113 to Cys-349. 3 residues coordinate [4Fe-4S] cluster: Cys-120, Cys-124, and Cys-127. S-adenosyl-L-methionine-binding positions include 172–173 (GE), Ser-204, 227–229 (SLH), and Asn-305. Residue Cys-349 is the S-methylcysteine intermediate of the active site.

Belongs to the radical SAM superfamily. RlmN family. [4Fe-4S] cluster is required as a cofactor.

It is found in the cytoplasm. The enzyme catalyses adenosine(2503) in 23S rRNA + 2 reduced [2Fe-2S]-[ferredoxin] + 2 S-adenosyl-L-methionine = 2-methyladenosine(2503) in 23S rRNA + 5'-deoxyadenosine + L-methionine + 2 oxidized [2Fe-2S]-[ferredoxin] + S-adenosyl-L-homocysteine. The catalysed reaction is adenosine(37) in tRNA + 2 reduced [2Fe-2S]-[ferredoxin] + 2 S-adenosyl-L-methionine = 2-methyladenosine(37) in tRNA + 5'-deoxyadenosine + L-methionine + 2 oxidized [2Fe-2S]-[ferredoxin] + S-adenosyl-L-homocysteine. Its function is as follows. Specifically methylates position 2 of adenine 2503 in 23S rRNA and position 2 of adenine 37 in tRNAs. This is Probable dual-specificity RNA methyltransferase RlmN from Streptococcus agalactiae serotype V (strain ATCC BAA-611 / 2603 V/R).